Consider the following 692-residue polypeptide: Methionine--tRNA ligase (692 aa).

The short motif at 15–25 (PYANGPIHLGH) is the 'HIGH' region element. Positions 146, 149, 159, and 162 each coordinate Zn(2+). Positions 332–336 (KMSKS) match the 'KMSKS' region motif. Lys-335 serves as a coordination point for ATP. The segment at 552–577 (TTEAAPEKKAKKSAETADVAVDTRSP) is disordered. Basic and acidic residues predominate over residues 556 to 566 (APEKKAKKSAE). The tRNA-binding domain occupies 591-692 (DFAKLDLRIA…EGAQPGMRVK (102 aa)).

This sequence belongs to the class-I aminoacyl-tRNA synthetase family. MetG type 1 subfamily. Homodimer. The cofactor is Zn(2+).

It localises to the cytoplasm. It carries out the reaction tRNA(Met) + L-methionine + ATP = L-methionyl-tRNA(Met) + AMP + diphosphate. In terms of biological role, is required not only for elongation of protein synthesis but also for the initiation of all mRNA translation through initiator tRNA(fMet) aminoacylation. The chain is Methionine--tRNA ligase from Shewanella sediminis (strain HAW-EB3).